Reading from the N-terminus, the 896-residue chain is FHIP family protein C05D11.8 (896 aa).

The segment at 823–865 is disordered; sequence STASSPRTSDDHDPTLFYGRSTMAPPGRKPLLREPSRQETLDD. The span at 853-865 shows a compositional bias: basic and acidic residues; sequence LLREPSRQETLDD.

It belongs to the FHIP family.

The polypeptide is FHIP family protein C05D11.8 (Caenorhabditis elegans).